The following is an 85-amino-acid chain: Large ribosomal subunit protein bL27 (85 aa).

The segment at 1–20 (MAHKKGASSSRNGRDSNAQR) is disordered. The span at 7–19 (ASSSRNGRDSNAQ) shows a compositional bias: polar residues.

The protein belongs to the bacterial ribosomal protein bL27 family.

In Kineococcus radiotolerans (strain ATCC BAA-149 / DSM 14245 / SRS30216), this protein is Large ribosomal subunit protein bL27.